Reading from the N-terminus, the 876-residue chain is MKKLKASEIRQKYLDFFVEKGHMVEPSAPLVPIDDDTLLWINSGVATLKKYFDGRETPKKPRIVNSQKAIRTNDIENVGFTARHHTFFEMLGNFSIGDYFKQEAIEFAWEFLTSDKWMGMEPDKLYVTIHPEDMEAYNIWHKDIGLEESRIIRIEGNFWDIGEGPSGPNTEIFYDRGEAYGQDDPAEEMYPGGENERYLEVWNLVFSEFNHNKDHSYTPLPNKNIDTGMGLERMASVSQNVRTNYETDLFMPIMNEIEKVSGKQYLVNNEQDVAFKVIADHIRTIAFAISDGALPANEGRGYVLRRLLRRAVRFSQTLGINEPFMYKLVDIVADIMEPYYPNVKEKADFIKRVIKSEEERFHETLEDGLAILNELIKKAKATTNEINGKDAFKLYDTYGFPIELTEEIAVQAGLKVDMTTFESEMQQQRDRARQARQNSQSMQVQSEVLKNITSASTFVGYDTATAQTTLTHLIYNGEEVSQVEAGETVYFMLTETPFYAVSGGQVADTGIVYNDNFEIAVSEVTKAPNGQNLHKGVVQFGQVNVGATVSAEVNQNDRRDIQKNHSATHLLHAALKSVLGDHVNQAGSLVEADRLRFDFSHFGPMTNDEIDQVERLVNEEIWKGIDVNIQEMDIASAKEMGAMALFGEKYGDVVRVVNMAPFSIELCGGIHVRNTSEIGLFKIVSESGTGAGVRRIEALTGKAAFLYLEDIQEKFNTMKSQLKVKSDDQVVDKLTQLQDEEKALLKQLEQRDKEITSLKMGNIENQVEEINGYKVLVTEVDVPNAKAIRSTMDDFKSKLQDTIIILASNVDDKVSMVATVPKSLTNNVKAGDLIKQMAPIVGGKGGGRPDMAQGGGTQPENISKSLSFIKDYIKNL.

H565, H569, C667, and H671 together coordinate Zn(2+).

Belongs to the class-II aminoacyl-tRNA synthetase family. Requires Zn(2+) as cofactor.

The protein resides in the cytoplasm. The enzyme catalyses tRNA(Ala) + L-alanine + ATP = L-alanyl-tRNA(Ala) + AMP + diphosphate. In terms of biological role, catalyzes the attachment of alanine to tRNA(Ala) in a two-step reaction: alanine is first activated by ATP to form Ala-AMP and then transferred to the acceptor end of tRNA(Ala). Also edits incorrectly charged Ser-tRNA(Ala) and Gly-tRNA(Ala) via its editing domain. This is Alanine--tRNA ligase from Staphylococcus aureus (strain MSSA476).